The following is a 127-amino-acid chain: Large ribosomal subunit protein uL22 (127 aa).

Belongs to the universal ribosomal protein uL22 family. In terms of assembly, part of the 50S ribosomal subunit.

In terms of biological role, this protein binds specifically to 23S rRNA; its binding is stimulated by other ribosomal proteins, e.g. L4, L17, and L20. It is important during the early stages of 50S assembly. It makes multiple contacts with different domains of the 23S rRNA in the assembled 50S subunit and ribosome. The globular domain of the protein is located near the polypeptide exit tunnel on the outside of the subunit, while an extended beta-hairpin is found that lines the wall of the exit tunnel in the center of the 70S ribosome. The protein is Large ribosomal subunit protein uL22 of Brucella suis (strain ATCC 23445 / NCTC 10510).